A 156-amino-acid chain; its full sequence is Small ribosomal subunit protein uS7 (156 aa).

The protein belongs to the universal ribosomal protein uS7 family. Part of the 30S ribosomal subunit. Contacts proteins S9 and S11.

Its function is as follows. One of the primary rRNA binding proteins, it binds directly to 16S rRNA where it nucleates assembly of the head domain of the 30S subunit. Is located at the subunit interface close to the decoding center, probably blocks exit of the E-site tRNA. The chain is Small ribosomal subunit protein uS7 from Pseudomonas aeruginosa (strain LESB58).